The chain runs to 270 residues: DNA adenine methylase (270 aa).

Positions 10, 14, 54, and 181 each coordinate S-adenosyl-L-methionine.

This sequence belongs to the N(4)/N(6)-methyltransferase family.

It catalyses the reaction a 2'-deoxyadenosine in DNA + S-adenosyl-L-methionine = an N(6)-methyl-2'-deoxyadenosine in DNA + S-adenosyl-L-homocysteine + H(+). An alpha subtype methylase, recognizes the double-stranded sequence 5'-GATC-3' and methylates A-2. Overexpression leads to hypermutability. May be involved in methyl-directed DNA mismatch repair, initiation of chromosome replication and gene expression. The sequence is that of DNA adenine methylase from Serratia marcescens.